A 94-amino-acid polypeptide reads, in one-letter code: MTKSELIERLATQQSHIPAKAVEDAVKEMLEHMASTLAQGERIEIRGFGSFSLHYRAPRTGRNPKTGDKVELEGKYVPHFKPGKELRDRANIYG.

Belongs to the bacterial histone-like protein family. In terms of assembly, heterodimer of an alpha and a beta chain.

In terms of biological role, this protein is one of the two subunits of integration host factor, a specific DNA-binding protein that functions in genetic recombination as well as in transcriptional and translational control. The sequence is that of Integration host factor subunit beta from Citrobacter koseri (strain ATCC BAA-895 / CDC 4225-83 / SGSC4696).